A 251-amino-acid polypeptide reads, in one-letter code: Low molecular mass lipoprotein PBMHPC-21 (251 aa).

The N-terminal stretch at 1-16 (MKFVVVFASCVLAVSA) is a signal peptide.

Belongs to the 30 kDa lipoprotein family.

It localises to the secreted. The sequence is that of Low molecular mass lipoprotein PBMHPC-21 from Bombyx mori (Silk moth).